Reading from the N-terminus, the 311-residue chain is UDP-N-acetylenolpyruvoylglucosamine reductase (311 aa).

The region spanning 28-197 (KIGGNARWLV…VSARFHLARG (170 aa)) is the FAD-binding PCMH-type domain. The active site involves Arg177. The Proton donor role is filled by Ser226. Glu296 is a catalytic residue.

The protein belongs to the MurB family. Requires FAD as cofactor.

Its subcellular location is the cytoplasm. It catalyses the reaction UDP-N-acetyl-alpha-D-muramate + NADP(+) = UDP-N-acetyl-3-O-(1-carboxyvinyl)-alpha-D-glucosamine + NADPH + H(+). Its pathway is cell wall biogenesis; peptidoglycan biosynthesis. In terms of biological role, cell wall formation. This Magnetococcus marinus (strain ATCC BAA-1437 / JCM 17883 / MC-1) protein is UDP-N-acetylenolpyruvoylglucosamine reductase.